Consider the following 424-residue polypeptide: MNPLWQQYIQILNQVVKPALGCTEPIAAAYASAVARTLLGIVPEAISVQVSDNLYKNSMGVYVPGTGKIGLAIAAAAGAIAGNAEAGLEVLAAITPEQVAQAQDLIDAGKVKVERTETEEFIYCCVTLKAGEQEALVKICGGHTLIAEKRLNGEPVFTADNAQSAATGSICDGIDISIKSIYQFAQEVPFDQIKFILKASELNGKLSDEGMAKPYGLEVGRTMKSGIAAGIIGEDLLNKIVMLTAAASDARMGGANLPAMSNLGSGNQGIAATIPVVLTAQCYNVTEEKLARALIMSHLGAIYIKSHYPPLSAFCGNTVTSAAASMAMVYIAGGSFEQSCFAIQNVISDSSGMVCDGAKASCAMKVSTSSSAAVRSFLMALNSQNVSGQGIIATDVEKTIKNIGKMILNGMSSTDVTIIDIMST.

The protein belongs to the UPF0597 family.

This Shewanella sp. (strain W3-18-1) protein is UPF0597 protein Sputw3181_2955.